Here is a 263-residue protein sequence, read N- to C-terminus: L-histidine 2-aminobutanoyltransferase (263 aa).

Belongs to the methyltransferase superfamily. CntL family.

It carries out the reaction L-histidine + S-adenosyl-L-methionine = (2S)-2-amino-4-{[(1S)-1-carboxy-2-(1H-imidazol-4-yl)ethyl]amino}butanoate + S-methyl-5'-thioadenosine + H(+). Its function is as follows. Catalyzes the nucleophilic attack of one alpha-aminobutanoate moiety from SAM onto L-histidine to produce the intermediate (2S)-2-amino-4-{[(1S)-1-carboxy-2-(1H-imidazol-4-yl)ethyl]amino}butanoate. Functions in the biosynthesis of the metallophore pseudopaline, which is involved in the acquisition of nickel and zinc, and thus enables bacterial growth inside the host, where metal access is limited. Therefore, this enzyme probably contributes to Pseudomonas virulence. Appears to be specific for L-histidine as substrate. The polypeptide is L-histidine 2-aminobutanoyltransferase (Pseudomonas aeruginosa (strain ATCC 15692 / DSM 22644 / CIP 104116 / JCM 14847 / LMG 12228 / 1C / PRS 101 / PAO1)).